A 427-amino-acid polypeptide reads, in one-letter code: Adenylosuccinate synthetase (427 aa).

GTP-binding positions include Gly-12 to Lys-18 and Gly-40 to Thr-42. Asp-13 (proton acceptor) is an active-site residue. Asp-13 and Gly-40 together coordinate Mg(2+). IMP-binding positions include Asp-13–Lys-16, Asn-38–His-41, Thr-128, Arg-142, Gln-223, Thr-238, and Arg-302. Residue His-41 is the Proton donor of the active site. Thr-298–Arg-304 contacts substrate. Residues Arg-304, Arg-330–Asp-332, and Ser-412–Gly-414 contribute to the GTP site.

The protein belongs to the adenylosuccinate synthetase family. As to quaternary structure, homodimer. Mg(2+) is required as a cofactor.

Its subcellular location is the cytoplasm. It catalyses the reaction IMP + L-aspartate + GTP = N(6)-(1,2-dicarboxyethyl)-AMP + GDP + phosphate + 2 H(+). It functions in the pathway purine metabolism; AMP biosynthesis via de novo pathway; AMP from IMP: step 1/2. In terms of biological role, plays an important role in the de novo pathway of purine nucleotide biosynthesis. Catalyzes the first committed step in the biosynthesis of AMP from IMP. The polypeptide is Adenylosuccinate synthetase (Brachyspira hyodysenteriae (strain ATCC 49526 / WA1)).